The following is a 562-amino-acid chain: Protein wntless (562 aa).

The Cytoplasmic portion of the chain corresponds to 1–13 (MSGTILENLSGRK). A helical transmembrane segment spans residues 14–34 (LSILVATLLLCQVLCFLLGGL). At 35–239 (YAPLPAGHVT…AIHQNGGFTQ (205 aa)) the chain is on the lumenal side. An N-linked (GlcNAc...) asparagine glycan is attached at Asn58. A helical membrane pass occupies residues 240-260 (IWLLLKTMLFPFVVGIMIWFW). Topologically, residues 261–270 (RRVHLLQRSP) are cytoplasmic. The helical transmembrane segment at 271 to 291 (ALLEYMLIYLGAALTFLNLPL) threads the bilayer. Residues 292 to 311 (EYLSLVYEMPYMLLLSDIRQ) lie on the Lumenal side of the membrane. A helical transmembrane segment spans residues 312 to 332 (GIFYAMLLTFWLVFAGEHMLI). Topologically, residues 333–344 (QDAPNKSTIRSR) are cytoplasmic. The chain crosses the membrane as a helical span at residues 345–365 (YWKHLSAVVVGCISLFVFDIC). At 366-390 (ERGVQLRNPFYSIWTTPLGAKVAMT) the chain is on the lumenal side. A helical membrane pass occupies residues 391-411 (FIVLAGVSAAIYFLFLCYMIW). Residues 412–441 (KVFRNIGDKRTSLPSMSQARRLHYEGLIYR) lie on the Cytoplasmic side of the membrane. A helical transmembrane segment spans residues 442-462 (FKFLMLATLVCAALTVAGFIM). The Lumenal segment spans residues 463–482 (GQMAEGQWDWNDNVAIQPTS). A helical transmembrane segment spans residues 483-503 (AFLTGVYGMWNIYIFALLILY). Topologically, residues 504–562 (APSHKQWPAMHHSDETTQSNENIVASAASEEIEFSHLPSDSNPSEISSLTSFTRKVAFD) are cytoplasmic.

The protein belongs to the wntless family. Interacts with wg; in the Golgi. Interacts with Vps35, a component of the retromer complex; wls stability is regulated by Vps35.

The protein resides in the presynaptic cell membrane. It localises to the postsynaptic cell membrane. Its subcellular location is the cell membrane. It is found in the endoplasmic reticulum membrane. The protein localises to the endosome membrane. The protein resides in the golgi apparatus membrane. Functionally, a segment polarity gene required for wingless (wg)-dependent patterning processes, acting in both wg-sending cells and wg-target cells. In non-neuronal cells wls directs wg secretion. The wls traffic loop encompasses the Golgi, the cell surface, an endocytic compartment and a retrograde route leading back to the Golgi, and involves clathrin-mediated endocytosis and the retromer complex (a conserved protein complex consisting of Vps35 and Vps26). In neuronal cells (the larval motorneuron NMJ), the wg signal moves across the synapse via the release of wls-containing exosome-like vesicles. Postsynaptic wls is required for the trafficking of fz2 through the fz2-interacting protein Grip. This Drosophila sechellia (Fruit fly) protein is Protein wntless.